A 127-amino-acid chain; its full sequence is Protein yippee-like 4 (127 aa).

The 98-residue stretch at 27-124 folds into the Yippee domain; the sequence is RTYSCVHCRA…IEMSHMVKDN (98 aa). Residues Cys-31, Cys-34, Cys-87, and Cys-90 each coordinate Zn(2+). Residues Thr-92 and Thr-93 each carry the phosphothreonine modification. Residue Tyr-98 is modified to Phosphotyrosine.

This sequence belongs to the yippee family.

Its subcellular location is the nucleus. The protein localises to the nucleolus. This chain is Protein yippee-like 4 (YPEL4), found in Chlorocebus aethiops (Green monkey).